The sequence spans 342 residues: Phosphate acyltransferase (342 aa).

Belongs to the PlsX family. Homodimer. Probably interacts with PlsY.

It localises to the cytoplasm. It carries out the reaction a fatty acyl-[ACP] + phosphate = an acyl phosphate + holo-[ACP]. It participates in lipid metabolism; phospholipid metabolism. Catalyzes the reversible formation of acyl-phosphate (acyl-PO(4)) from acyl-[acyl-carrier-protein] (acyl-ACP). This enzyme utilizes acyl-ACP as fatty acyl donor, but not acyl-CoA. This is Phosphate acyltransferase from Shewanella loihica (strain ATCC BAA-1088 / PV-4).